The following is a 202-amino-acid chain: MPGQQRRGGGSGGSDRRERRDRSGGGPAQEKNAYVERVVAINRVAKVVKGGRRFSFTALVVVGDADGTVGVGYGKAKEVPAAIAKGVEEAKKHFFKVPRIGSTIPHPVQGEEAAGVVLLKPASPGTGVIAGGPVRAVLECAGVHDVLSKSLGSSNPINIVHATVAALRGLMRPEEIAARRGLPLEDVAPPAMLRARAAGAGV.

Residues 1 to 13 (MPGQQRRGGGSGG) show a composition bias toward gly residues. The interval 1–31 (MPGQQRRGGGSGGSDRRERRDRSGGGPAQEK) is disordered. Basic and acidic residues predominate over residues 14–23 (SDRRERRDRS). In terms of domain architecture, S5 DRBM spans 34-97 (YVERVVAINR…EEAKKHFFKV (64 aa)).

Belongs to the universal ribosomal protein uS5 family. In terms of assembly, part of the 30S ribosomal subunit. Contacts proteins S4 and S8.

In terms of biological role, with S4 and S12 plays an important role in translational accuracy. Its function is as follows. Located at the back of the 30S subunit body where it stabilizes the conformation of the head with respect to the body. This is Small ribosomal subunit protein uS5 from Frankia alni (strain DSM 45986 / CECT 9034 / ACN14a).